The following is a 574-amino-acid chain: GRB2-associated-binding protein 4 (574 aa).

The disordered stretch occupies residues 1-33; sequence MSLPSPSPSRELCPPDPAFAPLSSWPGSGPAGG. In terms of domain architecture, PH spans 39–152; it reads HVLYSGWLRK…WVQSICQICG (114 aa). Disordered stretches follow at residues 176-200, 215-234, 293-331, and 418-513; these read PAEP…PVSH, LRSH…ASFS, SLAS…RPAE, and PPVN…PRST. The segment covering 181–193 has biased composition (polar residues); the sequence is CSHQHLPQEQEPT. Polar residues-rich tracts occupy residues 302 to 318 and 424 to 442; these read GSLT…SGKY and LKPN…NNRV. Residues 457–478 show a composition bias toward low complexity; it reads SGTSHTFDSSSSQHPISTQSIT. Residues 502–513 are compositionally biased toward polar residues; the sequence is GGTSSSAPPRST.

Belongs to the GAB family.

The chain is GRB2-associated-binding protein 4 (GAB4) from Homo sapiens (Human).